The sequence spans 70 residues: Large ribosomal subunit protein eL38 (70 aa).

It belongs to the eukaryotic ribosomal protein eL38 family.

This chain is Large ribosomal subunit protein eL38 (RPL38), found in Artemia franciscana (Brine shrimp).